The chain runs to 299 residues: tRNA dimethylallyltransferase (299 aa).

Residue 13–20 (GATASGKT) coordinates ATP. Residue 15–20 (TASGKT) coordinates substrate. The interaction with substrate tRNA stretch occupies residues 38 to 41 (DSRQ).

It belongs to the IPP transferase family. Monomer. Mg(2+) is required as a cofactor.

The catalysed reaction is adenosine(37) in tRNA + dimethylallyl diphosphate = N(6)-dimethylallyladenosine(37) in tRNA + diphosphate. In terms of biological role, catalyzes the transfer of a dimethylallyl group onto the adenine at position 37 in tRNAs that read codons beginning with uridine, leading to the formation of N6-(dimethylallyl)adenosine (i(6)A). The protein is tRNA dimethylallyltransferase of Prochlorococcus marinus (strain MIT 9312).